Consider the following 188-residue polypeptide: F-box only protein 36 (188 aa).

Positions 91 to 137 (FDFLERLSDDLLLTIISYLDLEDIARLCQTSHRFAKLCMSDKLWEQI) constitute an F-box domain.

As to quaternary structure, directly interacts with SKP1 and CUL1.

Its function is as follows. Substrate-recognition component of the SCF (SKP1-CUL1-F-box protein)-type E3 ubiquitin ligase complex. The polypeptide is F-box only protein 36 (FBXO36) (Homo sapiens (Human)).